The sequence spans 232 residues: MNKILLVDDDRELTSLLKELLDMEGFNVLVAHDGEQALALLDDSVDLLLLDVMMPKKNGIDTLKELRQTHQTPVIMLTARGSELDRVLGLELGADDYLPKPFNDRELVARIRAILRRSHWSEQQQTTEAGSPTLEVDALSLNPGRQEANFDGQTLELTGTEFTLLYLLAQHLGQVVSREHLSQEVLGKRLTPFDRAIDMHISNLRRKLPERKDGHPWFKTLRGRGYLMVSAS.

Residues 3 to 115 (KILLVDDDRE…ELVARIRAIL (113 aa)) form the Response regulatory domain. Position 51 is a 4-aspartylphosphate (aspartate 51). Residues 131-230 (SPTLEVDALS…LRGRGYLMVS (100 aa)) constitute a DNA-binding region (ompR/PhoB-type).

In terms of assembly, interacts with cognate sensor kinase CpxA. Phosphorylated by CpxA.

Its subcellular location is the cytoplasm. With respect to regulation, the two-component system is activated by envelope stress such as overexpression of some (misfolded) periplasmic proteins. Its function is as follows. Response regulator member of the two-component regulatory system CpxA/CpxR which responds to envelope stress response by activating or, in some cases, repressing expression of downstream genes. Binds to the promoter regions of various genes in vitro, including ompC, cpxP, ryhB and mrkA and, when CpxR is phosphorylated, pecO. Represses expression of the major pilin of type 3 fimbriae MrkA as well as that of type 1 fimbriae FimA. Repression of expression of MrkA appears to be indirect, mediated by activation of the iron homeostasis regulator RyhB. The protein is Transcriptional regulatory protein CpxR of Klebsiella pneumoniae subsp. pneumoniae (strain HS11286).